Here is a 342-residue protein sequence, read N- to C-terminus: Cytoplasmic tRNA 2-thiolation protein 1 (342 aa).

The protein belongs to the TtcA family. CTU1/NCS6/ATPBD3 subfamily.

The protein localises to the cytoplasm. The protein operates within tRNA modification; 5-methoxycarbonylmethyl-2-thiouridine-tRNA biosynthesis. In terms of biological role, plays a central role in 2-thiolation of mcm(5)S(2)U at tRNA wobble positions of tRNA(Lys), tRNA(Glu) and tRNA(Gln). Directly binds tRNAs and probably acts by catalyzing adenylation of tRNAs, an intermediate required for 2-thiolation. It is unclear whether it acts as a sulfurtransferase that transfers sulfur from thiocarboxylated URM1 onto the uridine of tRNAs at wobble position. The protein is Cytoplasmic tRNA 2-thiolation protein 1 of Anopheles gambiae (African malaria mosquito).